A 31-amino-acid chain; its full sequence is Cyclotide mden-L (31 aa).

Residues 1–31 constitute a cross-link (cyclopeptide (Gly-Asn)); the sequence is GSIPCGESCVYIPCISAVLGCSCKNKVCYRN. 3 disulfide bridges follow: C5/C21, C9/C23, and C14/C28.

It belongs to the cyclotide family. Bracelet subfamily. This is a cyclic peptide.

Its function is as follows. Probably participates in a plant defense mechanism. In Melicytus dentatus (Tree violet), this protein is Cyclotide mden-L.